A 467-amino-acid chain; its full sequence is NADH-quinone oxidoreductase subunit H (467 aa).

9 helical membrane passes run 18–38, 88–108, 131–151, 172–192, 206–226, 256–276, 296–316, 328–348, and 363–383; these read WWLVVIKAVFCFAFLMVTVLF, AVYVLAPIVAAIPAFMAIAVI, LPIAMLFILAVASVGIYGIVL, MISYEIAMGAAFASVFLYSGS, WYIVLLPVSFILYIVTMVGET, FMLAEYVNMVTVSAVATTLFL, WWPLLWFVVKVQLLLFFFIWL, LMKLGWKVLIPVSLVWLMLVA, and IALYIGGGVLVLLLLSFLVDM. Residues 389-467 form a disordered region; that stretch reads GKAADQPAET…PTDGKEASDG (79 aa). Residues 418–430 are compositionally biased toward pro residues; the sequence is PVPPMPGQQVPPV.

This sequence belongs to the complex I subunit 1 family. In terms of assembly, NDH-1 is composed of 14 different subunits. Subunits NuoA, H, J, K, L, M, N constitute the membrane sector of the complex.

It localises to the cell membrane. The enzyme catalyses a quinone + NADH + 5 H(+)(in) = a quinol + NAD(+) + 4 H(+)(out). Its function is as follows. NDH-1 shuttles electrons from NADH, via FMN and iron-sulfur (Fe-S) centers, to quinones in the respiratory chain. The immediate electron acceptor for the enzyme in this species is believed to be ubiquinone. Couples the redox reaction to proton translocation (for every two electrons transferred, four hydrogen ions are translocated across the cytoplasmic membrane), and thus conserves the redox energy in a proton gradient. This subunit may bind ubiquinone. This Streptomyces coelicolor (strain ATCC BAA-471 / A3(2) / M145) protein is NADH-quinone oxidoreductase subunit H.